A 297-amino-acid polypeptide reads, in one-letter code: tRNA uridine(34) hydroxylase (297 aa).

Positions 133 to 228 constitute a Rhodanese domain; it reads RGEEVVFFDG…YGETFKDQGL (96 aa). The Cysteine persulfide intermediate role is filled by C188.

This sequence belongs to the TrhO family.

The catalysed reaction is uridine(34) in tRNA + AH2 + O2 = 5-hydroxyuridine(34) in tRNA + A + H2O. Functionally, catalyzes oxygen-dependent 5-hydroxyuridine (ho5U) modification at position 34 in tRNAs. The polypeptide is tRNA uridine(34) hydroxylase (Arthrobacter sp. (strain FB24)).